The primary structure comprises 835 residues: Ribonuclease R (835 aa).

One can recognise an RNB domain in the interval 267-593 (RVDLRELPLV…LLHRAIKYLI (327 aa)). Positions 652–733 (GDELEGVIAN…DDKQIDFELV (82 aa)) constitute an S1 motif domain. The segment covering 739–754 (LRGEGKTAKKRAAEAK) has biased composition (basic and acidic residues). The interval 739–835 (LRGEGKTAKK…KTKRTKQDAQ (97 aa)) is disordered. Basic residues predominate over residues 755–764 (RKAKEKKRAA). Residues 765 to 777 (TRSSSKESATARA) are compositionally biased toward low complexity. A compositionally biased stretch (basic and acidic residues) spans 783–793 (PTKRPEQTDSG). Over residues 809-829 (KPKVKKAHKKKPHSKPKKTKR) the composition is skewed to basic residues.

The protein belongs to the RNR ribonuclease family. RNase R subfamily.

The protein localises to the cytoplasm. The catalysed reaction is Exonucleolytic cleavage in the 3'- to 5'-direction to yield nucleoside 5'-phosphates.. In terms of biological role, 3'-5' exoribonuclease that releases 5'-nucleoside monophosphates and is involved in maturation of structured RNAs. This is Ribonuclease R from Vibrio parahaemolyticus serotype O3:K6 (strain RIMD 2210633).